We begin with the raw amino-acid sequence, 197 residues long: Imidazoleglycerol-phosphate dehydratase (197 aa).

The protein belongs to the imidazoleglycerol-phosphate dehydratase family.

The protein localises to the cytoplasm. It carries out the reaction D-erythro-1-(imidazol-4-yl)glycerol 3-phosphate = 3-(imidazol-4-yl)-2-oxopropyl phosphate + H2O. It participates in amino-acid biosynthesis; L-histidine biosynthesis; L-histidine from 5-phospho-alpha-D-ribose 1-diphosphate: step 6/9. The sequence is that of Imidazoleglycerol-phosphate dehydratase from Pseudomonas fluorescens (strain ATCC BAA-477 / NRRL B-23932 / Pf-5).